The sequence spans 244 residues: Biosynthetic peptidoglycan transglycosylase (244 aa).

A helical transmembrane segment spans residues 25–45 (LLLLLAIALLYQSWFLLHIIY).

Belongs to the glycosyltransferase 51 family.

The protein localises to the cell inner membrane. The enzyme catalyses [GlcNAc-(1-&gt;4)-Mur2Ac(oyl-L-Ala-gamma-D-Glu-L-Lys-D-Ala-D-Ala)](n)-di-trans,octa-cis-undecaprenyl diphosphate + beta-D-GlcNAc-(1-&gt;4)-Mur2Ac(oyl-L-Ala-gamma-D-Glu-L-Lys-D-Ala-D-Ala)-di-trans,octa-cis-undecaprenyl diphosphate = [GlcNAc-(1-&gt;4)-Mur2Ac(oyl-L-Ala-gamma-D-Glu-L-Lys-D-Ala-D-Ala)](n+1)-di-trans,octa-cis-undecaprenyl diphosphate + di-trans,octa-cis-undecaprenyl diphosphate + H(+). It functions in the pathway cell wall biogenesis; peptidoglycan biosynthesis. Its function is as follows. Peptidoglycan polymerase that catalyzes glycan chain elongation from lipid-linked precursors. This is Biosynthetic peptidoglycan transglycosylase from Nitrosomonas eutropha (strain DSM 101675 / C91 / Nm57).